The chain runs to 27 residues: Defensin-like protein 1 (27 aa).

Gln1 bears the Pyrrolidone carboxylic acid mark.

It belongs to the DEFL family. In terms of assembly, forms oligomers in its native state.

Its function is as follows. Possesses antifungal activity sensitive to inorganic cations. The polypeptide is Defensin-like protein 1 (Brassica campestris (Field mustard)).